The following is a 147-amino-acid chain: Lectin-like protein BA14k (147 aa).

The signal sequence occupies residues 1-26; sequence MNSFRKTCAGALALIFGATSIVPTVA. Residues 80 to 100 form a helical membrane-spanning segment; it reads GWWYPLAAFGAGAIIGGAISQ.

The protein belongs to the BA14k family.

Its subcellular location is the cell membrane. Its function is as follows. Has immunoglobulin-binding and hemagglutination properties, and can bind to mannose. Essential for virulence. May be involved in LPS biosynthesis or polysaccharide transport. The sequence is that of Lectin-like protein BA14k from Brucella abortus (strain S19).